Reading from the N-terminus, the 89-residue chain is Small ribosomal subunit protein uS15 (89 aa).

Belongs to the universal ribosomal protein uS15 family. In terms of assembly, part of the 30S ribosomal subunit. Forms a bridge to the 50S subunit in the 70S ribosome, contacting the 23S rRNA.

In terms of biological role, one of the primary rRNA binding proteins, it binds directly to 16S rRNA where it helps nucleate assembly of the platform of the 30S subunit by binding and bridging several RNA helices of the 16S rRNA. Its function is as follows. Forms an intersubunit bridge (bridge B4) with the 23S rRNA of the 50S subunit in the ribosome. The chain is Small ribosomal subunit protein uS15 from Desulfosudis oleivorans (strain DSM 6200 / JCM 39069 / Hxd3) (Desulfococcus oleovorans).